The chain runs to 420 residues: D-tagatose-1,6-bisphosphate aldolase subunit GatZ (420 aa).

Belongs to the GatZ/KbaZ family. GatZ subfamily. Forms a complex with GatY.

The protein operates within carbohydrate metabolism; D-tagatose 6-phosphate degradation; D-glyceraldehyde 3-phosphate and glycerone phosphate from D-tagatose 6-phosphate: step 2/2. Its function is as follows. Component of the tagatose-1,6-bisphosphate aldolase GatYZ that is required for full activity and stability of the Y subunit. Could have a chaperone-like function for the proper and stable folding of GatY. When expressed alone, GatZ does not show any aldolase activity. Is involved in the catabolism of galactitol. In Escherichia coli O7:K1 (strain IAI39 / ExPEC), this protein is D-tagatose-1,6-bisphosphate aldolase subunit GatZ.